The chain runs to 559 residues: Tryprostatin B 6-hydroxylase (559 aa).

3 helical membrane-spanning segments follow: residues 13-35 (PSVMKCGYLATAGLIGICTHLSY), 48-65 (YVRFHLCLTMGVAALLYA), and 82-104 (VSLLMATYLVGLFASLLLYRTLF). Heme is bound at residue Cys502.

It belongs to the cytochrome P450 family. Heme is required as a cofactor.

Its subcellular location is the membrane. The catalysed reaction is tryprostatin B + reduced [NADPH--hemoprotein reductase] + O2 = 6-hydroxytryprostatin B + oxidized [NADPH--hemoprotein reductase] + H2O + H(+). The protein operates within mycotoxin biosynthesis. In terms of biological role, cytochrome P450 monooxygenase; part of the gene cluster that mediates the biosynthesis of fumitremorgins, indole alkaloids that carry not only intriguing chemical structures, but also interesting biological and pharmacological activities. The biosynthesis of fumitremorgin-type alkaloids begins by condensation of the two amino acids L-tryptophan and L-proline to brevianamide F, catalyzed by the non-ribosomal peptide synthetase ftmA. Brevianamide F is then prenylated by the prenyltransferase ftmPT1/ftmB in the presence of dimethylallyl diphosphate, resulting in the formation of tryprostatin B. The three cytochrome P450 monooxygenases, ftmP450-1/ftmC, ftmP450-2/ftmE and ftmP450-3/FtmG, are responsible for the conversion of tryprostatin B to 6-hydroxytryprostatin B, tryprostatin A to fumitremorgin C and fumitremorgin C to 12,13-dihydroxyfumitremorgin C, respectively. The putative methyltransferase ftmMT/ftmD is expected for the conversion of 6-hydroxytryprostatin B to tryprostatin A. FtmPT2/FtmH catalyzes the prenylation of 12,13-dihydroxyfumitre-morgin C in the presence of dimethylallyl diphosphate, resulting in the formation of fumitremorgin B. Fumitremorgin B is further converted to verruculogen by ftmOx1/ftmF via the insertion of an endoperoxide bond between the two prenyl moieties. In some fungal species, verruculogen is further converted to fumitremorgin A, but the enzymes involved in this step have not been identified yet. This Aspergillus fumigatus (Neosartorya fumigata) protein is Tryprostatin B 6-hydroxylase.